The primary structure comprises 479 residues: Serine carboxypeptidase-like 44 (479 aa).

The first 22 residues, 1–22 (MVGGKWRFLEVAVVVMVLQWSC), serve as a signal peptide directing secretion. Disulfide bonds link Cys-92–Cys-352, Cys-253–Cys-270, and Cys-295–Cys-320. Residue Asn-143 is glycosylated (N-linked (GlcNAc...) asparagine). Residue Ser-184 is part of the active site. Asn-265 carries N-linked (GlcNAc...) asparagine glycosylation. Residue Asn-341 is glycosylated (N-linked (GlcNAc...) asparagine). Asp-389 is an active-site residue. Asn-411 is a glycosylation site (N-linked (GlcNAc...) asparagine). His-446 is an active-site residue.

It belongs to the peptidase S10 family. As to expression, expressed in seedlings.

The protein resides in the secreted. Its function is as follows. Probable carboxypeptidase. The chain is Serine carboxypeptidase-like 44 (SCPL44) from Arabidopsis thaliana (Mouse-ear cress).